The sequence spans 406 residues: Imidazolonepropionase (406 aa).

Fe(3+) contacts are provided by His-72 and His-74. His-72 and His-74 together coordinate Zn(2+). Residues Arg-81, Tyr-144, and His-177 each contribute to the 4-imidazolone-5-propanoate site. Tyr-144 lines the N-formimidoyl-L-glutamate pocket. A Fe(3+)-binding site is contributed by His-242. Position 242 (His-242) interacts with Zn(2+). A 4-imidazolone-5-propanoate-binding site is contributed by Gln-245. Position 317 (Asp-317) interacts with Fe(3+). Asp-317 is a Zn(2+) binding site. N-formimidoyl-L-glutamate-binding residues include Asn-319 and Gly-321. Residue Thr-322 coordinates 4-imidazolone-5-propanoate.

Belongs to the metallo-dependent hydrolases superfamily. HutI family. Zn(2+) serves as cofactor. It depends on Fe(3+) as a cofactor.

Its subcellular location is the cytoplasm. The enzyme catalyses 4-imidazolone-5-propanoate + H2O = N-formimidoyl-L-glutamate. Its pathway is amino-acid degradation; L-histidine degradation into L-glutamate; N-formimidoyl-L-glutamate from L-histidine: step 3/3. In terms of biological role, catalyzes the hydrolytic cleavage of the carbon-nitrogen bond in imidazolone-5-propanoate to yield N-formimidoyl-L-glutamate. It is the third step in the universal histidine degradation pathway. The polypeptide is Imidazolonepropionase (Yersinia pestis bv. Antiqua (strain Antiqua)).